We begin with the raw amino-acid sequence, 1054 residues long: Disks large-associated protein 2 (1054 aa).

Disordered stretches follow at residues 32-87 and 242-301; these read EPEE…SGSR and SHSL…SDDN. Positions 242 to 255 are enriched in polar residues; it reads SHSLEGSSKSNANG. A compositionally biased stretch (basic residues) spans 267 to 281; it reads HAHHAKHSKRSKSKE. Residues 289–299 show a composition bias toward low complexity; it reads RPGMSSWWSSD. Residues S298, S304, S386, and S452 each carry the phosphoserine modification. 2 disordered regions span residues 442–464 and 609–666; these read GDEE…ILPE and YKKT…TDSL. The segment covering 628–641 has biased composition (polar residues); the sequence is VTAQSSTESTQDAY. Phosphoserine occurs at positions 662, 665, 668, and 715. Residues 719–746 are disordered; it reads QDSEFPEHQPYPRSDVETATDSDTESRG. Phosphothreonine is present on T738. A phosphoserine mark is found at S740, S771, S806, S978, and S1007. Basic and acidic residues-rich tracts occupy residues 977–987 and 1002–1020; these read ESPERKEERKV and ITRE…EARR. A disordered region spans residues 977–1021; that stretch reads ESPERKEERKVPPPIPKKPPKGKFPITREKSLDLPDRQRQEARRR.

Belongs to the SAPAP family. In terms of assembly, interacts with DLG1 and DLG4/PSD-95. As to expression, expressed in brain and kidney.

It localises to the cell membrane. The protein localises to the postsynaptic density. The protein resides in the synapse. May play a role in the molecular organization of synapses and neuronal cell signaling. Could be an adapter protein linking ion channel to the subsynaptic cytoskeleton. May induce enrichment of PSD-95/SAP90 at the plasma membrane. The chain is Disks large-associated protein 2 from Homo sapiens (Human).